Here is a 417-residue protein sequence, read N- to C-terminus: Hydroxysteroid dehydrogenase-like protein 2 (417 aa).

Residues 17 to 23, lysine 42, and aspartate 74 each bind NADP(+); that span reads GASRGIG. Tyrosine 168 functions as the Proton acceptor in the catalytic mechanism. Position 172 (lysine 172) interacts with NADP(+). In terms of domain architecture, SCP2 spans 306-414; sequence SSPLQETFKA…KLEKILGQMN (109 aa).

It belongs to the short-chain dehydrogenases/reductases (SDR) family.

It is found in the peroxisome. The protein localises to the mitochondrion. Functionally, has apparently no steroid dehydrogenase activity. Might act as a metabolic regulator that affects systemic adaptation to nutritional cues. The polypeptide is Hydroxysteroid dehydrogenase-like protein 2 (hsdl2) (Xenopus tropicalis (Western clawed frog)).